We begin with the raw amino-acid sequence, 65 residues long: Putative primary metabolism protein prl65 (65 aa).

The disordered stretch occupies residues 1–25 (MTKYSKGNKVEYHPIGGPSGTSTST).

In terms of biological role, may play a role in primary metabolism. This is Putative primary metabolism protein prl65 from Schizosaccharomyces pombe (strain 972 / ATCC 24843) (Fission yeast).